A 376-amino-acid chain; its full sequence is Transmembrane protein 183A (376 aa).

Disordered regions lie at residues 1–20 (MARG…AMPK) and 100–127 (MDAQ…ELDG). The helical transmembrane segment at 300-320 (LNFIFIPIVMGMIFTLFTINV) threads the bilayer.

Belongs to the TMEM183 family.

The protein localises to the membrane. The protein is Transmembrane protein 183A (TMEM183A) of Homo sapiens (Human).